Consider the following 894-residue polypeptide: Phosphoenolpyruvate carboxylase (894 aa).

Catalysis depends on residues His-143 and Lys-556.

The protein belongs to the PEPCase type 1 family. It depends on Mg(2+) as a cofactor.

It carries out the reaction oxaloacetate + phosphate = phosphoenolpyruvate + hydrogencarbonate. Its function is as follows. Forms oxaloacetate, a four-carbon dicarboxylic acid source for the tricarboxylic acid cycle. The sequence is that of Phosphoenolpyruvate carboxylase from Acinetobacter baylyi (strain ATCC 33305 / BD413 / ADP1).